We begin with the raw amino-acid sequence, 353 residues long: 6-phosphogluconolactonase (353 aa).

The protein belongs to the cycloisomerase 2 family.

The protein resides in the cytoplasm. It catalyses the reaction 6-phospho-D-glucono-1,5-lactone + H2O = 6-phospho-D-gluconate + H(+). It functions in the pathway carbohydrate degradation; pentose phosphate pathway; D-ribulose 5-phosphate from D-glucose 6-phosphate (oxidative stage): step 2/3. Its function is as follows. Carboxylic ester hydrolase that may be involved in ulvan degradation. Ulvan is the main polysaccharide component of the Ulvales (green seaweed) cell wall. It is composed of disaccharide building blocks comprising 3-sulfated rhamnose (Rha3S) linked to D-glucuronic acid (GlcA), L-iduronic acid (IduA), or D-xylose (Xyl). Catalyzes the hydrolysis of 6-phosphogluconolactone to 6-phosphogluconate. This is 6-phosphogluconolactonase (pgl) from Formosa agariphila (strain DSM 15362 / KCTC 12365 / LMG 23005 / KMM 3901 / M-2Alg 35-1).